Here is a 487-residue protein sequence, read N- to C-terminus: UDP-N-acetylmuramoyl-L-alanyl-D-glutamate--2,6-diaminopimelate ligase (487 aa).

2 residues coordinate UDP-N-acetyl-alpha-D-muramoyl-L-alanyl-D-glutamate: L23 and S25. 108–114 is an ATP binding site; the sequence is GTNGKTS. Residues 150 to 151, S177, Q183, and R185 each bind UDP-N-acetyl-alpha-D-muramoyl-L-alanyl-D-glutamate; that span reads TT. K217 is modified (N6-carboxylysine). Meso-2,6-diaminopimelate contacts are provided by residues R378, 402–405, G453, and E457; that span reads DNPR. Residues 402-405 carry the Meso-diaminopimelate recognition motif motif; it reads DNPR.

The protein belongs to the MurCDEF family. MurE subfamily. It depends on Mg(2+) as a cofactor. Post-translationally, carboxylation is probably crucial for Mg(2+) binding and, consequently, for the gamma-phosphate positioning of ATP.

It is found in the cytoplasm. It catalyses the reaction UDP-N-acetyl-alpha-D-muramoyl-L-alanyl-D-glutamate + meso-2,6-diaminopimelate + ATP = UDP-N-acetyl-alpha-D-muramoyl-L-alanyl-gamma-D-glutamyl-meso-2,6-diaminopimelate + ADP + phosphate + H(+). It participates in cell wall biogenesis; peptidoglycan biosynthesis. In terms of biological role, catalyzes the addition of meso-diaminopimelic acid to the nucleotide precursor UDP-N-acetylmuramoyl-L-alanyl-D-glutamate (UMAG) in the biosynthesis of bacterial cell-wall peptidoglycan. The protein is UDP-N-acetylmuramoyl-L-alanyl-D-glutamate--2,6-diaminopimelate ligase of Ectopseudomonas mendocina (strain ymp) (Pseudomonas mendocina).